The following is a 322-amino-acid chain: tRNA U34 carboxymethyltransferase (322 aa).

Carboxy-S-adenosyl-L-methionine is bound by residues lysine 91, tryptophan 105, lysine 110, glycine 129, methionine 195, tyrosine 199, and arginine 314.

Belongs to the class I-like SAM-binding methyltransferase superfamily. CmoB family. In terms of assembly, homotetramer.

It catalyses the reaction carboxy-S-adenosyl-L-methionine + 5-hydroxyuridine(34) in tRNA = 5-carboxymethoxyuridine(34) in tRNA + S-adenosyl-L-homocysteine + H(+). Its function is as follows. Catalyzes carboxymethyl transfer from carboxy-S-adenosyl-L-methionine (Cx-SAM) to 5-hydroxyuridine (ho5U) to form 5-carboxymethoxyuridine (cmo5U) at position 34 in tRNAs. This chain is tRNA U34 carboxymethyltransferase, found in Ectopseudomonas mendocina (strain ymp) (Pseudomonas mendocina).